We begin with the raw amino-acid sequence, 308 residues long: Cell division protein FtsX (308 aa).

At 1 to 24 (MISRFFRHLFEALKSLKRNGWMTV) the chain is on the extracellular side. The helical transmembrane segment at 25–45 (AAVSSVMITLTLVAIFASVIF) threads the bilayer. Residues 46-178 (NTAKLATDIE…NTERLFKLAS (133 aa)) lie on the Cytoplasmic side of the membrane. Residues 179–199 (FIRVWGLGIAALLIFIAAFLI) form a helical membrane-spanning segment. Residues 200–236 (SNTIRITIISRSREIQIMRLVGAKNSYIRGPFLLEGA) are Extracellular-facing. Residues 237-257 (FIGLLGAIAPSVLVFIVYQIV) form a helical membrane-spanning segment. The Cytoplasmic segment spans residues 258-276 (YQSVNKSLVGQNLSMISPD). Residues 277–297 (LFSPLMIALLFVIGVFIGSLG) traverse the membrane as a helical segment. The Extracellular portion of the chain corresponds to 298-308 (SGISMRRFLKI).

Belongs to the ABC-4 integral membrane protein family. FtsX subfamily. Interacts with FtsE. Interacts (via large extracellular loop) with PcsB (via N-terminal coiled coil domain). This interaction directs PcsB to equatorial and septal sites of dividing cells.

Its subcellular location is the cell membrane. Its function is as follows. Part of the ABC transporter FtsEX involved in asymmetric cellular division facilitating the initiation of sporulation. Required in maintaining normal growth and cellular morphology. The polypeptide is Cell division protein FtsX (Streptococcus pneumoniae (strain ATCC BAA-255 / R6)).